A 464-amino-acid polypeptide reads, in one-letter code: Probable glycine dehydrogenase (decarboxylating) subunit 1 (464 aa).

It belongs to the GcvP family. N-terminal subunit subfamily. As to quaternary structure, the glycine cleavage system is composed of four proteins: P, T, L and H. In this organism, the P 'protein' is a heterodimer of two subunits.

The catalysed reaction is N(6)-[(R)-lipoyl]-L-lysyl-[glycine-cleavage complex H protein] + glycine + H(+) = N(6)-[(R)-S(8)-aminomethyldihydrolipoyl]-L-lysyl-[glycine-cleavage complex H protein] + CO2. The glycine cleavage system catalyzes the degradation of glycine. The P protein binds the alpha-amino group of glycine through its pyridoxal phosphate cofactor; CO(2) is released and the remaining methylamine moiety is then transferred to the lipoamide cofactor of the H protein. This Thiobacillus denitrificans (strain ATCC 25259 / T1) protein is Probable glycine dehydrogenase (decarboxylating) subunit 1.